The sequence spans 864 residues: Probable beta-glucosidase J (864 aa).

Residue Asp233 is part of the active site. The 168-residue stretch at 411 to 578 (TGEPGYTFRV…DTDAAIQQAV (168 aa)) folds into the PA14 domain. Asn434, Asn447, and Asn503 each carry an N-linked (GlcNAc...) asparagine glycan.

It belongs to the glycosyl hydrolase 3 family.

The protein resides in the secreted. It carries out the reaction Hydrolysis of terminal, non-reducing beta-D-glucosyl residues with release of beta-D-glucose.. Its pathway is glycan metabolism; cellulose degradation. Its function is as follows. Beta-glucosidases are one of a number of cellulolytic enzymes involved in the degradation of cellulosic biomass. Catalyzes the last step releasing glucose from the inhibitory cellobiose. The sequence is that of Probable beta-glucosidase J (bglJ) from Neosartorya fischeri (strain ATCC 1020 / DSM 3700 / CBS 544.65 / FGSC A1164 / JCM 1740 / NRRL 181 / WB 181) (Aspergillus fischerianus).